The primary structure comprises 1288 residues: CLIP-associating protein 2 (1288 aa).

Residues 1–62 (MALSLSQDRS…AAKSGASKEG (62 aa)) are disordered. Composition is skewed to low complexity over residues 19–32 (GSRP…FKVP) and 40–62 (ESAS…SKEG). The interval 62–312 (GAGAVDEEDF…RTLQSCLKSS (251 aa)) is TOG 1. HEAT repeat units follow at residues 174 to 209 (HGAE…IRHT), 210 to 246 (HVPR…EWQT), and 251 to 288 (RHAA…HFPG). Disordered regions lie at residues 314 to 571 (SVAS…SSRL) and 614 to 634 (ANSD…NGSI). 2 stretches are compositionally biased toward low complexity: residues 317–337 (SLPQ…RPLS) and 347–358 (PAGSKSSGSPAS). Composition is skewed to polar residues over residues 406-421 (KQTL…SQVD) and 468-478 (TALSTLSTGAQ). Positions 490-493 (SRIP) match the SXIP motif 1 motif. The segment covering 496–518 (QGCSRDSSPTRLSVAPSNISHIY) has biased composition (polar residues). An SXIP motif 2 motif is present at residues 527 to 530 (SRIP). The span at 616–630 (SDASSACSERSYSSR) shows a compositional bias: low complexity. A TOG 2 region spans residues 638–889 (MRQTEDVAEV…TKLLQNHLRN (252 aa)). HEAT repeat units follow at residues 718–755 (RVFS…KMGA) and 780–817 (LQFT…QMEP). Residues 891-900 (GNTAQASIGS) are compositionally biased toward polar residues. Disordered stretches follow at residues 891–936 (GNTA…FDYD) and 960–1047 (SVRS…DSGV). Positions 912 to 931 (SWSSPLTSPTNTSQNTPSPS) are enriched in low complexity. Positions 963-977 (SQEDMTEPPRKREGD) are enriched in basic and acidic residues. Residues 1019–1030 (SDSSFGSSSFNK) show a composition bias toward low complexity. Acidic residues predominate over residues 1036-1046 (DQEESLTDDSG). HEAT repeat units lie at residues 1047–1086 (VDQS…ETQL), 1091–1128 (EHFK…RQPW), 1167–1204 (ISPD…RLPK), and 1209–1246 (QMLP…VIGE).

This sequence belongs to the CLASP family. Interacts with microtubules.

Its subcellular location is the cytoplasm. The protein localises to the cytoskeleton. It is found in the microtubule organizing center. It localises to the centrosome. The protein resides in the chromosome. Its subcellular location is the centromere. The protein localises to the kinetochore. It is found in the spindle. It localises to the golgi apparatus. The protein resides in the trans-Golgi network. Its subcellular location is the cell membrane. The protein localises to the cell projection. It is found in the ruffle membrane. In terms of biological role, microtubule plus-end tracking protein that promotes the stabilization of dynamic microtubules. Involved in the nucleation of noncentrosomal microtubules originating from the trans-Golgi network (TGN). Required for the polarization of the cytoplasmic microtubule arrays in migrating cells towards the leading edge of the cell. May act at the cell cortex to enhance the frequency of rescue of depolymerizing microtubules. This cortical microtubule stabilizing activity is regulated at least in part by phosphatidylinositol 3-kinase signaling. Also performs a similar stabilizing function at the kinetochore which is essential for the bipolar alignment of chromosomes on the mitotic spindle. This chain is CLIP-associating protein 2 (clasp2), found in Danio rerio (Zebrafish).